Reading from the N-terminus, the 207-residue chain is Ribonuclease HII (207 aa).

The region spanning 10–199 is the RNase H type-2 domain; it reads RLIAGVDEVG…VRNALLDAEL (190 aa). D16, E17, and D108 together coordinate a divalent metal cation.

It belongs to the RNase HII family. Requires Mn(2+) as cofactor. Mg(2+) serves as cofactor.

It localises to the cytoplasm. The enzyme catalyses Endonucleolytic cleavage to 5'-phosphomonoester.. In terms of biological role, endonuclease that specifically degrades the RNA of RNA-DNA hybrids. In Erwinia tasmaniensis (strain DSM 17950 / CFBP 7177 / CIP 109463 / NCPPB 4357 / Et1/99), this protein is Ribonuclease HII.